Here is a 181-residue protein sequence, read N- to C-terminus: Oligoribonuclease (181 aa).

The Exonuclease domain maps to 8–171; sequence LIWIDLEMTG…QDIQESIAEL (164 aa). Tyr-129 is an active-site residue.

It belongs to the oligoribonuclease family.

It localises to the cytoplasm. In terms of biological role, 3'-to-5' exoribonuclease specific for small oligoribonucleotides. The chain is Oligoribonuclease from Shewanella oneidensis (strain ATCC 700550 / JCM 31522 / CIP 106686 / LMG 19005 / NCIMB 14063 / MR-1).